The primary structure comprises 197 residues: MKVLQEKILNEGKVLSGDVLKVDAFLNHQIDPVLMQEIGKEFAKRFKEENITKIVTIESSGIAPAVMAALELGVKVIFARKRKSLTLQDNMYVANVYSFTKQETNEISLSRNHIDENDRVLIIDDFLANGQAALGLMSLVEQSGASIAGIGIVIEKAFQDGGKKLREQGVRVESLAEIASLDNGTVTFVQQETAEVK.

Xanthine is bound by residues Leu-20 and Asn-27. 128-132 provides a ligand contact to 5-phospho-alpha-D-ribose 1-diphosphate; sequence ANGQA. Lys-156 is a xanthine binding site.

It belongs to the purine/pyrimidine phosphoribosyltransferase family. Xpt subfamily. Homodimer.

It is found in the cytoplasm. The enzyme catalyses XMP + diphosphate = xanthine + 5-phospho-alpha-D-ribose 1-diphosphate. Its pathway is purine metabolism; XMP biosynthesis via salvage pathway; XMP from xanthine: step 1/1. Converts the preformed base xanthine, a product of nucleic acid breakdown, to xanthosine 5'-monophosphate (XMP), so it can be reused for RNA or DNA synthesis. In Bacillus mycoides (strain KBAB4) (Bacillus weihenstephanensis), this protein is Xanthine phosphoribosyltransferase.